Consider the following 417-residue polypeptide: 4-hydroxy-3-methylbut-2-en-1-yl diphosphate synthase (flavodoxin) (417 aa).

Residues Cys304, Cys307, Cys350, and Glu357 each contribute to the [4Fe-4S] cluster site.

It belongs to the IspG family. [4Fe-4S] cluster serves as cofactor.

It catalyses the reaction (2E)-4-hydroxy-3-methylbut-2-enyl diphosphate + oxidized [flavodoxin] + H2O + 2 H(+) = 2-C-methyl-D-erythritol 2,4-cyclic diphosphate + reduced [flavodoxin]. It participates in isoprenoid biosynthesis; isopentenyl diphosphate biosynthesis via DXP pathway; isopentenyl diphosphate from 1-deoxy-D-xylulose 5-phosphate: step 5/6. Converts 2C-methyl-D-erythritol 2,4-cyclodiphosphate (ME-2,4cPP) into 1-hydroxy-2-methyl-2-(E)-butenyl 4-diphosphate. In Rhizobium rhizogenes (strain K84 / ATCC BAA-868) (Agrobacterium radiobacter), this protein is 4-hydroxy-3-methylbut-2-en-1-yl diphosphate synthase (flavodoxin).